The following is a 159-amino-acid chain: Probable inactive acireductone dioxygenase 2 (159 aa).

It belongs to the acireductone dioxygenase (ARD) family.

The protein localises to the cytoplasm. It localises to the nucleus. Probable inactive acireductone dioxygenase. This is Probable inactive acireductone dioxygenase 2 from Caenorhabditis briggsae.